A 144-amino-acid polypeptide reads, in one-letter code: Cytochrome c oxidase subunit 4 isoform 1, mitochondrial (144 aa).

Topologically, residues serine 1–asparagine 73 are mitochondrial matrix. The residue at position 4 (lysine 4) is an N6-acetyllysine; alternate. Lysine 4 is modified (N6-succinyllysine; alternate). An N6-acetyllysine modification is found at lysine 28. A phosphoserine mark is found at serine 31 and serine 33. Residue lysine 35 is modified to N6-acetyllysine; alternate. Position 35 is an N6-succinyllysine; alternate (lysine 35). Lysine 42 bears the N6-acetyllysine mark. The helical transmembrane segment at glutamate 74–tyrosine 99 threads the bilayer. At valine 100–lysine 144 the chain is on the mitochondrial intermembrane side.

Belongs to the cytochrome c oxidase IV family. Component of the cytochrome c oxidase (complex IV, CIV), a multisubunit enzyme composed of 14 subunits. The complex is composed of a catalytic core of 3 subunits MT-CO1, MT-CO2 and MT-CO3, encoded in the mitochondrial DNA, and 11 supernumerary subunits COX4I, COX5A, COX5B, COX6A, COX6B, COX6C, COX7A, COX7B, COX7C, COX8 and NDUFA4, which are encoded in the nuclear genome. The complex exists as a monomer or a dimer and forms supercomplexes (SCs) in the inner mitochondrial membrane with NADH-ubiquinone oxidoreductase (complex I, CI) and ubiquinol-cytochrome c oxidoreductase (cytochrome b-c1 complex, complex III, CIII), resulting in different assemblies (supercomplex SCI(1)III(2)IV(1) and megacomplex MCI(2)III(2)IV(2)). Interacts with PHB2; the interaction decreases in absence of SPHK2. Interacts with AFG1L. Interacts with ABCB7; this interaction allows the regulation of cellular iron homeostasis and cellular reactive oxygen species (ROS) levels in cardiomyocytes. Interacts with FLVCR2; this interaction occurs in the absence of heme and is disrupted upon heme binding. Interacts with IRGC.

The protein localises to the mitochondrion inner membrane. It functions in the pathway energy metabolism; oxidative phosphorylation. In terms of biological role, component of the cytochrome c oxidase, the last enzyme in the mitochondrial electron transport chain which drives oxidative phosphorylation. The respiratory chain contains 3 multisubunit complexes succinate dehydrogenase (complex II, CII), ubiquinol-cytochrome c oxidoreductase (cytochrome b-c1 complex, complex III, CIII) and cytochrome c oxidase (complex IV, CIV), that cooperate to transfer electrons derived from NADH and succinate to molecular oxygen, creating an electrochemical gradient over the inner membrane that drives transmembrane transport and the ATP synthase. Cytochrome c oxidase is the component of the respiratory chain that catalyzes the reduction of oxygen to water. Electrons originating from reduced cytochrome c in the intermembrane space (IMS) are transferred via the dinuclear copper A center (CU(A)) of subunit 2 and heme A of subunit 1 to the active site in subunit 1, a binuclear center (BNC) formed by heme A3 and copper B (CU(B)). The BNC reduces molecular oxygen to 2 water molecules using 4 electrons from cytochrome c in the IMS and 4 protons from the mitochondrial matrix. The sequence is that of Cytochrome c oxidase subunit 4 isoform 1, mitochondrial (COX4I1) from Theropithecus gelada (Gelada baboon).